We begin with the raw amino-acid sequence, 152 residues long: UPF0178 protein Plav_1521 (152 aa).

The segment at 114–152 (LRETGQSKGGGPAFSKEDRSRFLRSLEDTVQAIRRRPPP) is disordered. Residues 128-140 (SKEDRSRFLRSLE) show a composition bias toward basic and acidic residues.

It belongs to the UPF0178 family.

The sequence is that of UPF0178 protein Plav_1521 from Parvibaculum lavamentivorans (strain DS-1 / DSM 13023 / NCIMB 13966).